A 160-amino-acid chain; its full sequence is Ureidoglycolate lyase (160 aa).

This sequence belongs to the ureidoglycolate lyase family. In terms of assembly, homodimer. It depends on Ni(2+) as a cofactor.

The catalysed reaction is (S)-ureidoglycolate = urea + glyoxylate. Its pathway is nitrogen metabolism; (S)-allantoin degradation. Catalyzes the catabolism of the allantoin degradation intermediate (S)-ureidoglycolate, generating urea and glyoxylate. Involved in the anaerobic utilization of allantoin as sole nitrogen source. Reinforces the induction of genes involved in the degradation of allantoin and glyoxylate by producing glyoxylate. The protein is Ureidoglycolate lyase of Escherichia coli O127:H6 (strain E2348/69 / EPEC).